Consider the following 195-residue polypeptide: PRELI domain containing protein 3B (195 aa).

Residues 1–172 (MKIWTSEHVF…VIHKLNAEIE (172 aa)) enclose the PRELI/MSF1 domain. Ser-46 and Ser-51 each carry phosphoserine.

It belongs to the slowmo family.

This chain is PRELI domain containing protein 3B (Prelid3b), found in Mus musculus (Mouse).